The chain runs to 873 residues: MTQIHQINDIDVHRITSGQVITDLTTAVKELVDNSIDANANQIEIIFKDYGLESIECSDNGDGIDPSNYEFLALKHYTSKIAKFQDVAKVQTLGFRGEALSSLCGIAKLSVITTTSPPKADKLEYDMVGHITSKTTTSRNKGTTVLVSQLFHNLPVRQKEFSKTFKRQFTKCLTVIQGYAIINAAIKFSVWNITPKGKKNLILSTMRNSSMRKNISSVFGAGGMRGLEEVDLVLDLNPFKNRMLGKYTDDPDFLDLDYKIRVKGYISQNSFGCGRNSKDRQFIYVNKRPVEYSTLLKCCNEVYKTFNNVQFPAVFLNLELPMSLIDVNVTPDKRVILLHNERAVIDIFKTTLSDYYNRQELALPKRMCSQSEQQAQKRLKTEVFDDRSTTHESDNENYHTARSESNQSNHAHFNSTTGVIDKSNGTELTSVMDGNYTNVTDVIGSECEVSVDSSVVLDEGNSSTPTKKLPSIKTDSQNLSDLNLNNFSNPEFQNITSPDKARSLEKVVEEPVYFDIDGEKFQEKAVLSQADGLVFVDNECHEHTNDCCHQERRGSTDTEQDDEADSIYAEIEPVEINVRTPLKNSRKSISKDNYRSLSDGLTHRKFEDEILEYNLSTKNFKEISKNGKQMSSIISKRKSEAQENIIKNKDELEDFEQGEKYLTLTVSKNDFKKMEVVGQFNLGFIIVTRKVDNKYDLFIVDQHASDEKYNFETLQAVTVFKSQKLIIPQPVELSVIDELVVLDNLPVFEKNGFKLKIDEEEEFGSRVKLLSLPTSKQTLFDLGDFNELIHLIKEDGGLRRDNIRCSKIRSMFAMRACRSSIMIGKPLNKKTMTRVVHNLSELDKPWNCPHGRPTMRHLMELRDWSSFSKDYEI.

Residues 1-357 (MTQIHQINDI…FKTTLSDYYN (357 aa)) are DNA- and ATP-binding. The span at 379-402 (LKTEVFDDRSTTHESDNENYHTAR) shows a compositional bias: basic and acidic residues. Residues 379-423 (LKTEVFDDRSTTHESDNENYHTARSESNQSNHAHFNSTTGVIDKS) are disordered. Ser-393 bears the Phosphoserine mark. Residues 403–423 (SESNQSNHAHFNSTTGVIDKS) show a composition bias toward polar residues. At Ser-566 the chain carries Phosphoserine. The interaction with MLH1 stretch occupies residues 661–873 (YLTLTVSKND…WSSFSKDYEI (213 aa)).

Belongs to the DNA mismatch repair MutL/HexB family. As to quaternary structure, heterodimer of MLH1 and PMS1, called MutLalpha, which is the major MMR MutL activity correcting base-base mismatches as well as IDLs. The heterodimer binds double strand DNA independently of a mismatch with positive cooperativity and has more than one DNA binding site. Forms a ternary complex with either the MSH2-MSH6 (MutSalpha) or the MSH2-MSH3 heterodimer (MutSbeta), which recognize and bind to mismatch DNA. Ternary complex formation is promoted by ATP binding.

The protein resides in the nucleus. Its function is as follows. Required for DNA mismatch repair (MMR), correcting base-base mismatches and insertion-deletion loops (IDLs) resulting from DNA replication, DNA damage or from recombination events between non-identical sequences during meiosis. Component of the MutLalpha heterodimer that forms a ternary complex with the MutS heterodimers, which initially recognize the DNA mismatches. This complex is thought to be responsible for directing the downstream MMR events, including strand discrimination, excision, and resynthesis. Plays a major role in maintaining the genetic stability of simple sequence repeats and in the repair of heteroduplex sites present in meiotic recombination intermediates. The protein is DNA mismatch repair protein PMS1 (PMS1) of Saccharomyces cerevisiae (strain ATCC 204508 / S288c) (Baker's yeast).